The sequence spans 367 residues: UDP-N-acetylglucosamine--N-acetylmuramyl-(pentapeptide) pyrophosphoryl-undecaprenol N-acetylglucosamine transferase (367 aa).

UDP-N-acetyl-alpha-D-glucosamine is bound by residues 11 to 13, Asn125, Arg163, Ser197, and Gln289; that span reads TAG.

The protein belongs to the glycosyltransferase 28 family. MurG subfamily.

It localises to the cell membrane. The catalysed reaction is di-trans,octa-cis-undecaprenyl diphospho-N-acetyl-alpha-D-muramoyl-L-alanyl-D-glutamyl-meso-2,6-diaminopimeloyl-D-alanyl-D-alanine + UDP-N-acetyl-alpha-D-glucosamine = di-trans,octa-cis-undecaprenyl diphospho-[N-acetyl-alpha-D-glucosaminyl-(1-&gt;4)]-N-acetyl-alpha-D-muramoyl-L-alanyl-D-glutamyl-meso-2,6-diaminopimeloyl-D-alanyl-D-alanine + UDP + H(+). The protein operates within cell wall biogenesis; peptidoglycan biosynthesis. Cell wall formation. Catalyzes the transfer of a GlcNAc subunit on undecaprenyl-pyrophosphoryl-MurNAc-pentapeptide (lipid intermediate I) to form undecaprenyl-pyrophosphoryl-MurNAc-(pentapeptide)GlcNAc (lipid intermediate II). The chain is UDP-N-acetylglucosamine--N-acetylmuramyl-(pentapeptide) pyrophosphoryl-undecaprenol N-acetylglucosamine transferase from Clavibacter sepedonicus (Clavibacter michiganensis subsp. sepedonicus).